The following is a 41-amino-acid chain: Tachystatin-C (41 aa).

3 disulfides stabilise this stretch: Cys-12–Cys-28, Cys-19–Cys-33, and Cys-27–Cys-38.

In terms of tissue distribution, granular hemocytes, small secretory granules.

The protein resides in the secreted. Binds to chitin. Shows strong activity against E.coli (IC(50) is 1.2 ug/ml). Is also very active against S.aureus (IC(50) is 0.8 ug/ml), C.albicans (IC(50) is 0.9 ug/ml) and P.pastoris (IC(50) is 0.3 ug/ml). Binds to chitin (5.2 uM are required to obtain 50% of binding). Causes hemolysis on sheep erythrocytes, probably by forming ion-permeable pores. In Tachypleus tridentatus (Japanese horseshoe crab), this protein is Tachystatin-C.